The chain runs to 558 residues: Potassium-transporting ATPase potassium-binding subunit 1 (558 aa).

A run of 12 helical transmembrane segments spans residues 1-21 (MEII…SGYL), 66-86 (FNGF…WLFL), 127-147 (MIVM…VCIA), 166-186 (IVRF…ILLM), 245-265 (IWSN…MLFL), 281-301 (ALIL…LTMW), 327-347 (FGAG…TGSV), 354-374 (LTPI…VFGG), 377-397 (VGLM…SLMV), 416-436 (IVLV…LAFM), 482-502 (ISTG…QLMI), and 531-551 (IVFI…LGPI).

It belongs to the KdpA family. The system is composed of three essential subunits: KdpA, KdpB and KdpC.

It localises to the cell membrane. Part of the high-affinity ATP-driven potassium transport (or Kdp) system, which catalyzes the hydrolysis of ATP coupled with the electrogenic transport of potassium into the cytoplasm. This subunit binds the extracellular potassium ions and delivers the ions to the membrane domain of KdpB through an intramembrane tunnel. This chain is Potassium-transporting ATPase potassium-binding subunit 1, found in Staphylococcus aureus (strain Mu50 / ATCC 700699).